Consider the following 205-residue polypeptide: NADH-ubiquinone oxidoreductase chain 6 (205 aa).

Helical transmembrane passes span 48–68 (FFAM…FLFV), 86–106 (YLPV…FILD), and 150–170 (VWFL…IVLT).

It belongs to the complex I subunit 6 family. In terms of assembly, complex I is composed of about 45 different subunits.

The protein localises to the mitochondrion membrane. It catalyses the reaction a ubiquinone + NADH + 5 H(+)(in) = a ubiquinol + NAD(+) + 4 H(+)(out). Core subunit of the mitochondrial membrane respiratory chain NADH dehydrogenase (Complex I) that is believed to belong to the minimal assembly required for catalysis. Complex I functions in the transfer of electrons from NADH to the respiratory chain. The immediate electron acceptor for the enzyme is believed to be ubiquinone. This Brassica campestris (Field mustard) protein is NADH-ubiquinone oxidoreductase chain 6 (ND6).